Reading from the N-terminus, the 67-residue chain is Kappa-conotoxin-like Em11.8 (67 aa).

A signal peptide spans 1-26; the sequence is MMFRLTSVSCFLLVIACLNLFQVVLT. Cystine bridges form between C29/C43, C36/C48, C42/C51, and C47/C55. F59 carries the post-translational modification Phenylalanine amide. Positions 63 to 67 are excised as a propeptide; the sequence is ATFQE.

This sequence belongs to the conotoxin I2 superfamily. Expressed by the venom duct.

It is found in the secreted. Inhibits the vertebrate voltage-gated potassium channels Kv1.1/KCNA1 and Kv1.3/KCNA3. The sequence is that of Kappa-conotoxin-like Em11.8 from Conus emaciatus (False virgin cone).